We begin with the raw amino-acid sequence, 1070 residues long: DNA-directed RNA polymerase subunit beta (1070 aa).

The protein belongs to the RNA polymerase beta chain family. As to quaternary structure, in plastids the minimal PEP RNA polymerase catalytic core is composed of four subunits: alpha, beta, beta', and beta''. When a (nuclear-encoded) sigma factor is associated with the core the holoenzyme is formed, which can initiate transcription.

The protein resides in the plastid. It is found in the chloroplast. The enzyme catalyses RNA(n) + a ribonucleoside 5'-triphosphate = RNA(n+1) + diphosphate. In terms of biological role, DNA-dependent RNA polymerase catalyzes the transcription of DNA into RNA using the four ribonucleoside triphosphates as substrates. The sequence is that of DNA-directed RNA polymerase subunit beta from Piper cenocladum (Ant piper).